We begin with the raw amino-acid sequence, 367 residues long: 2-aminoethylphosphonate--pyruvate transaminase (367 aa).

Pyridoxal 5'-phosphate contacts are provided by residues 65–67 (SGS), Y92, T143, and D168. An N6-(pyridoxal phosphate)lysine modification is found at K194. Position 243 (T243) interacts with pyridoxal 5'-phosphate.

The protein belongs to the class-V pyridoxal-phosphate-dependent aminotransferase family. PhnW subfamily. As to quaternary structure, homodimer. Pyridoxal 5'-phosphate is required as a cofactor.

The catalysed reaction is (2-aminoethyl)phosphonate + pyruvate = phosphonoacetaldehyde + L-alanine. In terms of biological role, involved in phosphonate degradation. This chain is 2-aminoethylphosphonate--pyruvate transaminase (phnW), found in Salmonella typhimurium (strain LT2 / SGSC1412 / ATCC 700720).